A 753-amino-acid chain; its full sequence is Probable phosphoenolpyruvate synthase (753 aa).

The Tele-phosphohistidine intermediate role is filled by histidine 398. 7 residues coordinate substrate: arginine 488, arginine 535, glutamate 631, glycine 653, threonine 654, asparagine 655, and aspartate 656. A Mg(2+)-binding site is contributed by glutamate 631. Mg(2+) is bound at residue aspartate 656. The active-site Proton donor is the cysteine 703.

It belongs to the PEP-utilizing enzyme family. Mg(2+) is required as a cofactor.

It carries out the reaction pyruvate + ATP + H2O = phosphoenolpyruvate + AMP + phosphate + 2 H(+). Its pathway is carbohydrate biosynthesis; gluconeogenesis. Its function is as follows. Catalyzes the phosphorylation of pyruvate to phosphoenolpyruvate. The chain is Probable phosphoenolpyruvate synthase (ppsA) from Archaeoglobus fulgidus (strain ATCC 49558 / DSM 4304 / JCM 9628 / NBRC 100126 / VC-16).